We begin with the raw amino-acid sequence, 214 residues long: Calcineurin B homologous protein 3 (214 aa).

Gly-2 carries N-myristoyl glycine lipidation. One can recognise an EF-hand domain in the interval 110–145; sequence CRTDKLRFLFNMYDSDNDNKITLEEYRKVVEELLSG. Positions 123, 125, 127, 129, and 134 each coordinate Ca(2+).

The protein belongs to the calcineurin regulatory subunit family. CHP subfamily. As to quaternary structure, monomer. Homodimer.

It localises to the nucleus. Its subcellular location is the cytoplasm. The protein resides in the membrane. It is found in the cell membrane. The protein localises to the cell projection. It localises to the lamellipodium. Its subcellular location is the ruffle membrane. Its function is as follows. Functions as an integral cofactor in cell pH regulation by controlling plasma membrane-type Na(+)/H(+) exchange activity. Promotes the induction of hematopoietic stem cell differentiation toward megakaryocytic lineage. Essential for the coupling of ERK cascade activation with the expression of ETS family genes in megakaryocytic differentiation. Also involved in granulocytic differentiation in a ERK-dependent manner. Inhibits the phosphatase activity of calcineurin. In Xenopus laevis (African clawed frog), this protein is Calcineurin B homologous protein 3.